The sequence spans 284 residues: MEMO1 family protein STK_20620 (284 aa).

It belongs to the MEMO1 family.

The polypeptide is MEMO1 family protein STK_20620 (Sulfurisphaera tokodaii (strain DSM 16993 / JCM 10545 / NBRC 100140 / 7) (Sulfolobus tokodaii)).